A 509-amino-acid chain; its full sequence is Maturase K (509 aa).

Belongs to the intron maturase 2 family. MatK subfamily.

It is found in the plastid. It localises to the chloroplast. Usually encoded in the trnK tRNA gene intron. Probably assists in splicing its own and other chloroplast group II introns. The polypeptide is Maturase K (Solanum bulbocastanum (Wild potato)).